The sequence spans 593 residues: Arginine--tRNA ligase (593 aa).

The short motif at 138–148 (ANPTGPLHVGH) is the 'HIGH' region element.

It belongs to the class-I aminoacyl-tRNA synthetase family. Monomer.

It is found in the cytoplasm. It carries out the reaction tRNA(Arg) + L-arginine + ATP = L-arginyl-tRNA(Arg) + AMP + diphosphate. The polypeptide is Arginine--tRNA ligase (Burkholderia vietnamiensis (strain G4 / LMG 22486) (Burkholderia cepacia (strain R1808))).